The primary structure comprises 68 residues: Beta-defensin 1 (68 aa).

The signal sequence occupies residues 1 to 21; it reads MRTSYLLLFTLCLLLSEMASG. A propeptide spanning residues 22–32 is cleaved from the precursor; that stretch reads GNFLTGLGHRS. 3 cysteine pairs are disulfide-bonded: Cys37/Cys66, Cys44/Cys59, and Cys49/Cys67.

This sequence belongs to the beta-defensin family. In terms of assembly, monomer. Homodimer.

Its subcellular location is the secreted. The protein localises to the membrane. Its function is as follows. Has bactericidal activity. May act as a ligand for C-C chemokine receptor CCR6. Positively regulates the sperm motility and bactericidal activity in a CCR6-dependent manner. Binds to CCR6 and triggers Ca2+ mobilization in the sperm which is important for its motility. This is Beta-defensin 1 (DEFB1) from Pan troglodytes (Chimpanzee).